Consider the following 284-residue polypeptide: D-tagatose-1,6-bisphosphate aldolase subunit GatY (284 aa).

Asp-82 (proton donor) is an active-site residue. Residues His-83 and His-180 each coordinate Zn(2+). Gly-181 contacts dihydroxyacetone phosphate. Residue His-208 coordinates Zn(2+). Residues 209–211 and 230–233 contribute to the dihydroxyacetone phosphate site; these read GAS and NVAT.

This sequence belongs to the class II fructose-bisphosphate aldolase family. TagBP aldolase GatY subfamily. Forms a complex with GatZ. Requires Zn(2+) as cofactor.

The enzyme catalyses D-tagatofuranose 1,6-bisphosphate = D-glyceraldehyde 3-phosphate + dihydroxyacetone phosphate. The protein operates within carbohydrate metabolism; D-tagatose 6-phosphate degradation; D-glyceraldehyde 3-phosphate and glycerone phosphate from D-tagatose 6-phosphate: step 2/2. Its function is as follows. Catalytic subunit of the tagatose-1,6-bisphosphate aldolase GatYZ, which catalyzes the reversible aldol condensation of dihydroxyacetone phosphate (DHAP or glycerone-phosphate) with glyceraldehyde 3-phosphate (G3P) to produce tagatose 1,6-bisphosphate (TBP). Requires GatZ subunit for full activity and stability. Is involved in the catabolism of galactitol. The protein is D-tagatose-1,6-bisphosphate aldolase subunit GatY of Escherichia coli O139:H28 (strain E24377A / ETEC).